Consider the following 71-residue polypeptide: Small ribosomal subunit protein bS21 (71 aa).

Belongs to the bacterial ribosomal protein bS21 family.

In Alcanivorax borkumensis (strain ATCC 700651 / DSM 11573 / NCIMB 13689 / SK2), this protein is Small ribosomal subunit protein bS21.